Reading from the N-terminus, the 350-residue chain is uncharacterized protein (350 aa).

The segment at 330–350 (RHPGDLRSEPHYRPSAKLAEF) is disordered. Positions 331–341 (HPGDLRSEPHY) are enriched in basic and acidic residues.

This is an uncharacterized protein from Mycobacterium tuberculosis.